An 88-amino-acid polypeptide reads, in one-letter code: RNA-binding protein Hfq (88 aa).

One can recognise a Sm domain in the interval 9–68 (DPFLNALRCERIPVSIYLVNGIKLQGQIESFDQFVILLKNTVNQMVYKHAISTVVPARAV). Residues 66-88 (RAVSHHTASDRPQGERPQETTEE) are disordered. Residues 72–88 (TASDRPQGERPQETTEE) show a composition bias toward basic and acidic residues.

It belongs to the Hfq family. Homohexamer.

In terms of biological role, RNA chaperone that binds small regulatory RNA (sRNAs) and mRNAs to facilitate mRNA translational regulation in response to envelope stress, environmental stress and changes in metabolite concentrations. Also binds with high specificity to tRNAs. The chain is RNA-binding protein Hfq from Aliivibrio salmonicida (strain LFI1238) (Vibrio salmonicida (strain LFI1238)).